The primary structure comprises 427 residues: Flotillin-1 (427 aa).

Residues Ser-19, Ser-163, and Ser-385 each carry the phosphoserine modification. Thr-387 is subject to Phosphothreonine.

Belongs to the band 7/mec-2 family. Flotillin subfamily. In terms of assembly, heterooligomeric complex of flotillin-1 and flotillin-2 and caveolin-1 and caveolin-2. Interacts with ECPAS.

The protein resides in the cell membrane. Its subcellular location is the endosome. The protein localises to the membrane. It localises to the caveola. It is found in the melanosome. The protein resides in the membrane raft. In terms of biological role, may act as a scaffolding protein within caveolar membranes, functionally participating in formation of caveolae or caveolae-like vesicles. The chain is Flotillin-1 (FLOT1) from Macaca mulatta (Rhesus macaque).